Reading from the N-terminus, the 180-residue chain is MSLDKKTVADRYAKALFELVDADNELDQTYQELIALRQVFEDNEGLDAALAGVQLSLDEKKSLIKDLQQGASKYVANLIQMVFDYGRIDCMVAIIDEFERRYDRKMKRMHADVTTAIQLDKQQEDQLKANLAKRFGANEVTLTKHVDPEILGGVIVHVDNKTLDGSLSSKIKQIRRLLVR.

The protein belongs to the ATPase delta chain family. As to quaternary structure, F-type ATPases have 2 components, F(1) - the catalytic core - and F(0) - the membrane proton channel. F(1) has five subunits: alpha(3), beta(3), gamma(1), delta(1), epsilon(1). F(0) has three main subunits: a(1), b(2) and c(10-14). The alpha and beta chains form an alternating ring which encloses part of the gamma chain. F(1) is attached to F(0) by a central stalk formed by the gamma and epsilon chains, while a peripheral stalk is formed by the delta and b chains.

Its subcellular location is the cell membrane. In terms of biological role, f(1)F(0) ATP synthase produces ATP from ADP in the presence of a proton or sodium gradient. F-type ATPases consist of two structural domains, F(1) containing the extramembraneous catalytic core and F(0) containing the membrane proton channel, linked together by a central stalk and a peripheral stalk. During catalysis, ATP synthesis in the catalytic domain of F(1) is coupled via a rotary mechanism of the central stalk subunits to proton translocation. Functionally, this protein is part of the stalk that links CF(0) to CF(1). It either transmits conformational changes from CF(0) to CF(1) or is implicated in proton conduction. The protein is ATP synthase subunit delta of Limosilactobacillus reuteri (strain DSM 20016) (Lactobacillus reuteri).